The chain runs to 366 residues: Cobalt-precorrin-5B C(1)-methyltransferase (366 aa).

It belongs to the CbiD family.

It carries out the reaction Co-precorrin-5B + S-adenosyl-L-methionine = Co-precorrin-6A + S-adenosyl-L-homocysteine. Its pathway is cofactor biosynthesis; adenosylcobalamin biosynthesis; cob(II)yrinate a,c-diamide from sirohydrochlorin (anaerobic route): step 6/10. In terms of biological role, catalyzes the methylation of C-1 in cobalt-precorrin-5B to form cobalt-precorrin-6A. The sequence is that of Cobalt-precorrin-5B C(1)-methyltransferase from Thermus thermophilus (strain ATCC BAA-163 / DSM 7039 / HB27).